Here is a 279-residue protein sequence, read N- to C-terminus: Urease accessory protein UreD (279 aa).

It belongs to the UreD family. As to quaternary structure, ureD, UreF and UreG form a complex that acts as a GTP-hydrolysis-dependent molecular chaperone, activating the urease apoprotein by helping to assemble the nickel containing metallocenter of UreC. The UreE protein probably delivers the nickel.

The protein resides in the cytoplasm. In terms of biological role, required for maturation of urease via the functional incorporation of the urease nickel metallocenter. The protein is Urease accessory protein UreD of Pseudomonas fluorescens (strain ATCC BAA-477 / NRRL B-23932 / Pf-5).